A 322-amino-acid chain; its full sequence is Glycerol-3-phosphate dehydrogenase [NAD(P)+] (322 aa).

Residues Trp-11, Arg-31, Arg-32, and Lys-101 each coordinate NADPH. 2 residues coordinate sn-glycerol 3-phosphate: Lys-101 and Gly-130. Ala-134 provides a ligand contact to NADPH. Sn-glycerol 3-phosphate-binding residues include Lys-184, Asp-237, Ser-247, Arg-248, and Asn-249. Lys-184 acts as the Proton acceptor in catalysis. Arg-248 serves as a coordination point for NADPH. 2 residues coordinate NADPH: Val-270 and Glu-272.

It belongs to the NAD-dependent glycerol-3-phosphate dehydrogenase family.

The protein localises to the cytoplasm. It catalyses the reaction sn-glycerol 3-phosphate + NAD(+) = dihydroxyacetone phosphate + NADH + H(+). The enzyme catalyses sn-glycerol 3-phosphate + NADP(+) = dihydroxyacetone phosphate + NADPH + H(+). Its pathway is membrane lipid metabolism; glycerophospholipid metabolism. Its function is as follows. Catalyzes the reduction of the glycolytic intermediate dihydroxyacetone phosphate (DHAP) to sn-glycerol 3-phosphate (G3P), the key precursor for phospholipid synthesis. The protein is Glycerol-3-phosphate dehydrogenase [NAD(P)+] of Thermus thermophilus (strain ATCC BAA-163 / DSM 7039 / HB27).